The following is a 57-amino-acid chain: UPF0057 membrane protein T23F2.5 (57 aa).

Helical transmembrane passes span 3–23 (LTCT…IGVW) and 36–56 (ILLT…VILA).

This sequence belongs to the UPF0057 (PMP3) family.

It localises to the membrane. The polypeptide is UPF0057 membrane protein T23F2.5 (Caenorhabditis elegans).